The chain runs to 356 residues: S-adenosylmethionine:tRNA ribosyltransferase-isomerase (356 aa).

The protein belongs to the QueA family. Monomer.

Its subcellular location is the cytoplasm. The catalysed reaction is 7-aminomethyl-7-carbaguanosine(34) in tRNA + S-adenosyl-L-methionine = epoxyqueuosine(34) in tRNA + adenine + L-methionine + 2 H(+). It functions in the pathway tRNA modification; tRNA-queuosine biosynthesis. Functionally, transfers and isomerizes the ribose moiety from AdoMet to the 7-aminomethyl group of 7-deazaguanine (preQ1-tRNA) to give epoxyqueuosine (oQ-tRNA). The polypeptide is S-adenosylmethionine:tRNA ribosyltransferase-isomerase (Escherichia coli O6:H1 (strain CFT073 / ATCC 700928 / UPEC)).